Consider the following 211-residue polypeptide: Protein-L-isoaspartate O-methyltransferase (211 aa).

Residue Ser-62 is part of the active site.

This sequence belongs to the methyltransferase superfamily. L-isoaspartyl/D-aspartyl protein methyltransferase family.

It is found in the cytoplasm. It carries out the reaction [protein]-L-isoaspartate + S-adenosyl-L-methionine = [protein]-L-isoaspartate alpha-methyl ester + S-adenosyl-L-homocysteine. Functionally, catalyzes the methyl esterification of L-isoaspartyl residues in peptides and proteins that result from spontaneous decomposition of normal L-aspartyl and L-asparaginyl residues. It plays a role in the repair and/or degradation of damaged proteins. This is Protein-L-isoaspartate O-methyltransferase from Shewanella woodyi (strain ATCC 51908 / MS32).